The sequence spans 420 residues: Gamma-glutamyl phosphate reductase (420 aa).

Belongs to the gamma-glutamyl phosphate reductase family.

The protein localises to the cytoplasm. It catalyses the reaction L-glutamate 5-semialdehyde + phosphate + NADP(+) = L-glutamyl 5-phosphate + NADPH + H(+). Its pathway is amino-acid biosynthesis; L-proline biosynthesis; L-glutamate 5-semialdehyde from L-glutamate: step 2/2. Functionally, catalyzes the NADPH-dependent reduction of L-glutamate 5-phosphate into L-glutamate 5-semialdehyde and phosphate. The product spontaneously undergoes cyclization to form 1-pyrroline-5-carboxylate. The polypeptide is Gamma-glutamyl phosphate reductase (Streptococcus pneumoniae serotype 19F (strain G54)).